The primary structure comprises 639 residues: Protein artemis (639 aa).

Disordered stretches follow at residues 450-496 (MDCT…LTSS), 515-570 (SELE…SQVD), and 590-617 (EAAE…VPQP). A compositionally biased stretch (acidic residues) spans 454–466 (ESNDDDDDEDDAA). Positions 518–537 (ENSQNTQTLSTENTASQSPE) are enriched in polar residues. Low complexity predominate over residues 548–560 (VHMSSSQSTHISD).

The protein belongs to the DNA repair metallo-beta-lactamase (DRMBL) family.

Its subcellular location is the nucleus. In terms of biological role, may have a role in the processing of DNA double strand breaks (DSBs) prior to their repair by the non homologous end joining (NHEJ) pathway. Probably exhibits both exonuclease and endonuclease activity. The sequence is that of Protein artemis (dclre1c) from Danio rerio (Zebrafish).